A 149-amino-acid polypeptide reads, in one-letter code: 16.9 kDa class I heat shock protein 3 (149 aa).

The sHSP domain occupies 35-149 (DTAAFANARV…PEVKAIEISG (115 aa)).

It belongs to the small heat shock protein (HSP20) family. As to quaternary structure, may form oligomeric structures.

It localises to the cytoplasm. This Oryza sativa subsp. japonica (Rice) protein is 16.9 kDa class I heat shock protein 3 (HSP16.9C).